A 265-amino-acid polypeptide reads, in one-letter code: Tryptophan synthase alpha chain (265 aa).

Residues Glu-49 and Asp-60 each act as proton acceptor in the active site.

It belongs to the TrpA family. In terms of assembly, tetramer of two alpha and two beta chains.

It carries out the reaction (1S,2R)-1-C-(indol-3-yl)glycerol 3-phosphate + L-serine = D-glyceraldehyde 3-phosphate + L-tryptophan + H2O. The protein operates within amino-acid biosynthesis; L-tryptophan biosynthesis; L-tryptophan from chorismate: step 5/5. Functionally, the alpha subunit is responsible for the aldol cleavage of indoleglycerol phosphate to indole and glyceraldehyde 3-phosphate. This chain is Tryptophan synthase alpha chain, found in Cupriavidus taiwanensis (strain DSM 17343 / BCRC 17206 / CCUG 44338 / CIP 107171 / LMG 19424 / R1) (Ralstonia taiwanensis (strain LMG 19424)).